Here is a 376-residue protein sequence, read N- to C-terminus: N-acetyldiaminopimelate deacetylase (376 aa).

Residue D69 is part of the active site. E128 (proton acceptor) is an active-site residue.

Belongs to the peptidase M20A family. N-acetyldiaminopimelate deacetylase subfamily.

The enzyme catalyses N-acetyl-(2S,6S)-2,6-diaminopimelate + H2O = (2S,6S)-2,6-diaminopimelate + acetate. The protein operates within amino-acid biosynthesis; L-lysine biosynthesis via DAP pathway; LL-2,6-diaminopimelate from (S)-tetrahydrodipicolinate (acetylase route): step 3/3. In terms of biological role, catalyzes the conversion of N-acetyl-diaminopimelate to diaminopimelate and acetate. This Bacillus cereus (strain G9842) protein is N-acetyldiaminopimelate deacetylase.